Here is a 122-residue protein sequence, read N- to C-terminus: Large ribosomal subunit protein uL14 (122 aa).

This sequence belongs to the universal ribosomal protein uL14 family. Part of the 50S ribosomal subunit. Forms a cluster with proteins L3 and L19. In the 70S ribosome, L14 and L19 interact and together make contacts with the 16S rRNA in bridges B5 and B8.

Binds to 23S rRNA. Forms part of two intersubunit bridges in the 70S ribosome. The chain is Large ribosomal subunit protein uL14 from Prosthecochloris aestuarii (strain DSM 271 / SK 413).